Here is a 278-residue protein sequence, read N- to C-terminus: Pantothenate synthetase (278 aa).

Residue 27–34 participates in ATP binding; sequence MGYLHEGH. Catalysis depends on His-34, which acts as the Proton donor. Gln-58 is a (R)-pantoate binding site. Gln-58 contacts beta-alanine. Position 144–147 (144–147) interacts with ATP; sequence GQKD. Gln-150 contributes to the (R)-pantoate binding site. Residues Val-173 and 181-184 contribute to the ATP site; that span reads MSSR.

Belongs to the pantothenate synthetase family. In terms of assembly, homodimer.

It localises to the cytoplasm. It catalyses the reaction (R)-pantoate + beta-alanine + ATP = (R)-pantothenate + AMP + diphosphate + H(+). Its pathway is cofactor biosynthesis; (R)-pantothenate biosynthesis; (R)-pantothenate from (R)-pantoate and beta-alanine: step 1/1. Its function is as follows. Catalyzes the condensation of pantoate with beta-alanine in an ATP-dependent reaction via a pantoyl-adenylate intermediate. This is Pantothenate synthetase from Roseiflexus castenholzii (strain DSM 13941 / HLO8).